The chain runs to 445 residues: Phosphoglucosamine mutase (445 aa).

Catalysis depends on Ser-102, which acts as the Phosphoserine intermediate. The Mg(2+) site is built by Ser-102, Asp-241, Asp-243, and Asp-245. Phosphoserine is present on Ser-102.

It belongs to the phosphohexose mutase family. It depends on Mg(2+) as a cofactor. Post-translationally, activated by phosphorylation.

It catalyses the reaction alpha-D-glucosamine 1-phosphate = D-glucosamine 6-phosphate. Its function is as follows. Catalyzes the conversion of glucosamine-6-phosphate to glucosamine-1-phosphate. This Salmonella paratyphi A (strain ATCC 9150 / SARB42) protein is Phosphoglucosamine mutase.